The primary structure comprises 336 residues: N6-methyladenosine RNA methyltransferase MTA1 (336 aa).

The disordered stretch occupies residues 61–83 (LISSEPPHLPFKTPEPKAGSGGL).

The protein belongs to the MT-A70-like family.

It carries out the reaction an adenosine in mRNA + S-adenosyl-L-methionine = an N(6)-methyladenosine in mRNA + S-adenosyl-L-homocysteine + H(+). Functionally, N6-methyladenosine RNA methyltransferase that plays a crucial role in fungal phenotypic traits, virulence, and stress tolerance. Mediates the methylation of mRNAs to produce N6-methyladenosine (m6A)-containing mRNAs. M6A is a modification present at internal sites of mRNAs and some non-coding RNAs and plays a role in mRNA stability and processing. Mediates specifically acid phosphatase APHA mRNA stability through a YTHDF1-dependent m6A modification of the A1306, A1341, and A1666 key methylation modification sites. Also mediates the stability of the transcription factor ZAP1 mRNA via modification of residue A1935 localized in the 3'UTR. This is N6-methyladenosine RNA methyltransferase MTA1 from Cryphonectria parasitica (strain ATCC 38755 / EP155).